The primary structure comprises 241 residues: Tetrahydromethanopterin S-methyltransferase subunit A (241 aa).

Residues 1–220 (MANKREPAPG…AKWQAGYYNG (220 aa)) lie on the Cytoplasmic side of the membrane. Histidine 85 contributes to the 5-hydroxybenzimidazolylcob(I)amide binding site. The chain crosses the membrane as a helical span at residues 221-241 (KIQGIATGLFLMLLIMGILMF).

It belongs to the MtrA family. As to quaternary structure, the complex is composed of 8 subunits; MtrA, MtrB, MtrC, MtrD, MtrE, MtrF, MtrG and MtrH. It depends on 5-hydroxybenzimidazolylcob(I)amide as a cofactor.

The protein resides in the cell membrane. It carries out the reaction 5-methyl-5,6,7,8-tetrahydromethanopterin + coenzyme M + 2 Na(+)(in) = 5,6,7,8-tetrahydromethanopterin + methyl-coenzyme M + 2 Na(+)(out). It functions in the pathway one-carbon metabolism; methanogenesis from CO(2); methyl-coenzyme M from 5,10-methylene-5,6,7,8-tetrahydromethanopterin: step 2/2. Functionally, part of a complex that catalyzes the formation of methyl-coenzyme M and tetrahydromethanopterin from coenzyme M and methyl-tetrahydromethanopterin. This is an energy-conserving, sodium-ion translocating step. This is Tetrahydromethanopterin S-methyltransferase subunit A from Methanocaldococcus jannaschii (strain ATCC 43067 / DSM 2661 / JAL-1 / JCM 10045 / NBRC 100440) (Methanococcus jannaschii).